We begin with the raw amino-acid sequence, 314 residues long: Replication initiation protein (314 aa).

Residues 1–18 (MSKKAEEIQAKQSLEKEN) show a composition bias toward basic and acidic residues. Residues 1 to 25 (MSKKAEEIQAKQSLEKENSNFSKTG) form a disordered region.

Belongs to the plasmid replication initiation factor family.

In terms of biological role, this protein is probably a specific topoisomerase involved in initiating replication. This protein is specifically required and may be rate-limiting for replication of the plasmid in vivo. This Staphylococcus aureus protein is Replication initiation protein (repE).